A 132-amino-acid chain; its full sequence is Small ribosomal subunit protein uS8 (132 aa).

It belongs to the universal ribosomal protein uS8 family. Part of the 30S ribosomal subunit. Contacts proteins S5 and S12.

In terms of biological role, one of the primary rRNA binding proteins, it binds directly to 16S rRNA central domain where it helps coordinate assembly of the platform of the 30S subunit. The protein is Small ribosomal subunit protein uS8 of Geobacter sp. (strain M21).